The sequence spans 264 residues: SPRY domain-containing SOCS box protein 2 (264 aa).

Positions 1 to 18 (MGQTALARGSSSTPSSHA) are enriched in polar residues. The disordered stretch occupies residues 1–53 (MGQTALARGSSSTPSSHALYSDLSPPEGLEELLSAPPPDLGAQRHHGWNPKDC). A compositionally biased stretch (low complexity) spans 21–34 (SDLSPPEGLEELLS). Residues 26 to 221 (PEGLEELLSA…VRIRYLGERR (196 aa)) enclose the B30.2/SPRY domain. One can recognise an SOCS box domain in the interval 222–264 (AEEPQSLLHLSRLCVRHALGDTRLGQISSLPLPPAMKRYLLYK).

This sequence belongs to the SPSB family. As to quaternary structure, component of the probable ECS(SPSB2) E3 ubiquitin-protein ligase complex which contains CUL5, RNF7/RBX2, Elongin BC complex and SPSB2. Interacts with CUL5, RNF7, ELOB and ELOC. Interacts with MET. Interacts (via B30.2/SPRY domain) with PAWR; this interaction occurs in association with the Elongin BC complex. Interacts with NOS2.

The protein resides in the cytoplasm. Its subcellular location is the cytosol. It participates in protein modification; protein ubiquitination. Functionally, substrate recognition component of a SCF-like ECS (Elongin BC-CUL2/5-SOCS-box protein) E3 ubiquitin-protein ligase complex which mediates the ubiquitination and subsequent proteasomal degradation of target proteins. Negatively regulates nitric oxide (NO) production and limits cellular toxicity in activated macrophages by mediating the ubiquitination and proteasomal degradation of NOS2. Acts as a bridge which links NOS2 with the ECS E3 ubiquitin ligase complex components ELOC and CUL5. This is SPRY domain-containing SOCS box protein 2 (Spsb2) from Rattus norvegicus (Rat).